Reading from the N-terminus, the 393-residue chain is Formate-dependent phosphoribosylglycinamide formyltransferase (393 aa).

N(1)-(5-phospho-beta-D-ribosyl)glycinamide-binding positions include 22–23 and Glu-82; that span reads EL. ATP is bound by residues Arg-114, Lys-155, 160-165, 195-198, and Glu-203; these read SSGKGQ and EGLV. Residues 119 to 308 enclose the ATP-grasp domain; sequence LLAAETLQLP…EFALHVRAFL (190 aa). Mg(2+) is bound by residues Glu-267 and Glu-279. Residues Asp-286, Lys-355, and 362 to 363 contribute to the N(1)-(5-phospho-beta-D-ribosyl)glycinamide site; that span reads RR.

Belongs to the PurK/PurT family. Homodimer.

The enzyme catalyses N(1)-(5-phospho-beta-D-ribosyl)glycinamide + formate + ATP = N(2)-formyl-N(1)-(5-phospho-beta-D-ribosyl)glycinamide + ADP + phosphate + H(+). It participates in purine metabolism; IMP biosynthesis via de novo pathway; N(2)-formyl-N(1)-(5-phospho-D-ribosyl)glycinamide from N(1)-(5-phospho-D-ribosyl)glycinamide (formate route): step 1/1. In terms of biological role, involved in the de novo purine biosynthesis. Catalyzes the transfer of formate to 5-phospho-ribosyl-glycinamide (GAR), producing 5-phospho-ribosyl-N-formylglycinamide (FGAR). Formate is provided by PurU via hydrolysis of 10-formyl-tetrahydrofolate. This Yersinia enterocolitica serotype O:8 / biotype 1B (strain NCTC 13174 / 8081) protein is Formate-dependent phosphoribosylglycinamide formyltransferase.